The sequence spans 590 residues: Muscarinic acetylcholine receptor M3 (590 aa).

Residues 1–67 (MTLHSNSTTS…DPLGGHTVWQ (67 aa)) lie on the Extracellular side of the membrane. N-linked (GlcNAc...) asparagine glycans are attached at residues Asn6, Asn15, Asn41, and Asn48. The helical transmembrane segment at 68 to 91 (VVFIAFLTGILALVTIIGNILVIV) threads the bilayer. The Cytoplasmic segment spans residues 92-104 (SFKVNKQLKTVNN). The helical transmembrane segment at 105 to 130 (YFLLSLACADLIIGVISMNLFTTYII) threads the bilayer. The Extracellular portion of the chain corresponds to 131-142 (MNRWALGNLACD). The cysteines at positions 141 and 221 are disulfide-linked. A helical membrane pass occupies residues 143 to 164 (LWLAIDYVASNASVMNLLVISF). At 165–184 (DRYFSITRPLTYRAKRTTKR) the chain is on the cytoplasmic side. A helical transmembrane segment spans residues 185–206 (AGVMIGLAWVISFVLWAPAILF). The Extracellular segment spans residues 207–229 (WQYFVGKRTVPPGECFIQFLSEP). Residues 230–252 (TITFGTAIAAFYMPVTIMTILYW) form a helical membrane-spanning segment. Topologically, residues 253-491 (RIYKETEKRT…SLVKEKKAAQ (239 aa)) are cytoplasmic. The short motif at 275–281 (AETENFV) is the Basolateral sorting signal element. The interval 323–357 (SSEQMDQDHSSSDSWNNNDAAASLENSASSDEEDI) is disordered. A compositionally biased stretch (low complexity) spans 334 to 345 (SDSWNNNDAAAS). Ser385 bears the Phosphoserine mark. A helical transmembrane segment spans residues 492 to 514 (TLSAILLAFIITWTPYNIMVLVN). Residues 515 to 526 (TFCDSCIPKTFW) are Extracellular-facing. A disulfide bond links Cys517 and Cys520. A helical membrane pass occupies residues 527 to 546 (NLGYWLCYINSTVNPVCYAL). The Cytoplasmic segment spans residues 547–590 (CNKTFRTTFKMLLLCQCDKKKRRKQQYQQRQSVIFHKRAPEQAL).

It belongs to the G-protein coupled receptor 1 family. Muscarinic acetylcholine receptor subfamily. CHRM3 sub-subfamily. In terms of assembly, homodimer; the dimers can form tetramers. Interacts with NALCN. Interacts with TMEM147.

The protein resides in the cell membrane. It is found in the postsynaptic cell membrane. It localises to the basolateral cell membrane. Its subcellular location is the endoplasmic reticulum membrane. The muscarinic acetylcholine receptor mediates various cellular responses, including inhibition of adenylate cyclase, breakdown of phosphoinositides and modulation of potassium channels through the action of G proteins. Primary transducing effect is Pi turnover. The polypeptide is Muscarinic acetylcholine receptor M3 (CHRM3) (Pongo pygmaeus (Bornean orangutan)).